We begin with the raw amino-acid sequence, 227 residues long: Small ribosomal subunit protein uS3 (227 aa).

A KH type-2 domain is found at Ile-39 to Lys-108.

Belongs to the universal ribosomal protein uS3 family. As to quaternary structure, part of the 30S ribosomal subunit. Forms a tight complex with proteins S10 and S14.

In terms of biological role, binds the lower part of the 30S subunit head. Binds mRNA in the 70S ribosome, positioning it for translation. The chain is Small ribosomal subunit protein uS3 from Persephonella marina (strain DSM 14350 / EX-H1).